The primary structure comprises 354 residues: MTELKNDRYLRALLRQPVDVTPVWMMRQAGRYLPEYKATRAQAGDFMSLCKNAELACEVTLQPLRRYPLDAAILFSDILTIPDAMGLGLYFEAGEGPRFTAPVTCKADVEKLPIPDPEGELGYVMNAVRTIRRELKGEVPLIGFSGSPWTLATYMVEGGSSKAFTVIKKMMYADPQALHLLLDKLAKSVTLYLNAQIKAGAQSVMIFDTWGGVLTGRDYQQFSLYYMHKIVDGLLRENDGRRVPVTLFTKGGGQWLEAMAETGCDALGLDWTTDIADARRRVGHKVALQGNMDPSMLYAPPARIEDEVATILAGFGQGEGHVFNLGHGIHQDVPPEHAGAFVEAVHRLSAQYHN.

Residues 27–31, Asp-77, Tyr-154, Thr-209, and His-327 each bind substrate; that span reads RQAGR.

Belongs to the uroporphyrinogen decarboxylase family. Homodimer.

It is found in the cytoplasm. It carries out the reaction uroporphyrinogen III + 4 H(+) = coproporphyrinogen III + 4 CO2. The protein operates within porphyrin-containing compound metabolism; protoporphyrin-IX biosynthesis; coproporphyrinogen-III from 5-aminolevulinate: step 4/4. In terms of biological role, catalyzes the decarboxylation of four acetate groups of uroporphyrinogen-III to yield coproporphyrinogen-III. The sequence is that of Uroporphyrinogen decarboxylase from Salmonella paratyphi B (strain ATCC BAA-1250 / SPB7).